A 242-amino-acid polypeptide reads, in one-letter code: Biosynthetic peptidoglycan transglycosylase (242 aa).

The chain crosses the membrane as a helical span at residues 21–41; sequence VALVVFWGGGIALFSVVPVPF.

The protein belongs to the glycosyltransferase 51 family.

Its subcellular location is the cell inner membrane. It catalyses the reaction [GlcNAc-(1-&gt;4)-Mur2Ac(oyl-L-Ala-gamma-D-Glu-L-Lys-D-Ala-D-Ala)](n)-di-trans,octa-cis-undecaprenyl diphosphate + beta-D-GlcNAc-(1-&gt;4)-Mur2Ac(oyl-L-Ala-gamma-D-Glu-L-Lys-D-Ala-D-Ala)-di-trans,octa-cis-undecaprenyl diphosphate = [GlcNAc-(1-&gt;4)-Mur2Ac(oyl-L-Ala-gamma-D-Glu-L-Lys-D-Ala-D-Ala)](n+1)-di-trans,octa-cis-undecaprenyl diphosphate + di-trans,octa-cis-undecaprenyl diphosphate + H(+). The protein operates within cell wall biogenesis; peptidoglycan biosynthesis. In terms of biological role, peptidoglycan polymerase that catalyzes glycan chain elongation from lipid-linked precursors. This Salmonella arizonae (strain ATCC BAA-731 / CDC346-86 / RSK2980) protein is Biosynthetic peptidoglycan transglycosylase.